A 267-amino-acid chain; its full sequence is 4-hydroxy-tetrahydrodipicolinate reductase (267 aa).

NAD(+)-binding positions include 8–13 (GAAGRM) and Glu-34. Position 35 (Arg-35) interacts with NADP(+). Residues 98-100 (GST) and 122-125 (APNM) contribute to the NAD(+) site. Catalysis depends on His-155, which acts as the Proton donor/acceptor. Position 156 (His-156) interacts with (S)-2,3,4,5-tetrahydrodipicolinate. Lys-159 serves as the catalytic Proton donor. 165 to 166 (GT) contributes to the (S)-2,3,4,5-tetrahydrodipicolinate binding site.

Belongs to the DapB family.

It localises to the cytoplasm. The catalysed reaction is (S)-2,3,4,5-tetrahydrodipicolinate + NAD(+) + H2O = (2S,4S)-4-hydroxy-2,3,4,5-tetrahydrodipicolinate + NADH + H(+). It catalyses the reaction (S)-2,3,4,5-tetrahydrodipicolinate + NADP(+) + H2O = (2S,4S)-4-hydroxy-2,3,4,5-tetrahydrodipicolinate + NADPH + H(+). Its pathway is amino-acid biosynthesis; L-lysine biosynthesis via DAP pathway; (S)-tetrahydrodipicolinate from L-aspartate: step 4/4. Functionally, catalyzes the conversion of 4-hydroxy-tetrahydrodipicolinate (HTPA) to tetrahydrodipicolinate. This is 4-hydroxy-tetrahydrodipicolinate reductase from Pelobacter propionicus (strain DSM 2379 / NBRC 103807 / OttBd1).